The sequence spans 20 residues: Snaclec ophioluxin subunit alpha (20 aa).

Cysteine 4 and cysteine 15 are oxidised to a cystine. One can recognise a C-type lectin domain in the interval 11 to 20; it reads YDQHCYRIIN.

It belongs to the snaclec family. Heterodimer of subunits alpha and beta; disulfide-linked. As to expression, expressed by the venom gland.

It is found in the secreted. Functionally, binds to the platelet and collagen receptor glycoprotein VI (GP6) and activates platelet aggregation. In Ophiophagus hannah (King cobra), this protein is Snaclec ophioluxin subunit alpha.